Here is a 393-residue protein sequence, read N- to C-terminus: Pre-mRNA-splicing regulator WTAP (393 aa).

Residues 242–393 (QIQISGNRTP…SSVNVQGSVL (152 aa)) are disordered. Residues 254-267 (EPKDEGETSGKDCG) are compositionally biased toward basic and acidic residues. 2 stretches are compositionally biased toward polar residues: residues 272-286 (GPSNGGSSLQRTHSS) and 321-353 (DGSSYINPLSTGYESVDSPTGSENSLTHQSNDT). The span at 354 to 365 (DSNHDSQEEKPV) shows a compositional bias: basic and acidic residues. Polar residues predominate over residues 369 to 393 (GNRTVSSRHLQNGLDSSVNVQGSVL).

It belongs to the fl(2)d family. As to quaternary structure, component of the WMM complex, a N6-methyltransferase complex composed of a catalytic subcomplex, named MAC, and of an associated subcomplex, named MACOM. Component of the MACOM subcomplex.

Its subcellular location is the nucleus speckle. It localises to the nucleus. The protein resides in the nucleoplasm. Its function is as follows. Associated component of the WMM complex, a complex that mediates N6-methyladenosine (m6A) methylation of RNAs, a modification that plays a role in the efficiency of mRNA splicing and RNA processing. The sequence is that of Pre-mRNA-splicing regulator WTAP from Xenopus laevis (African clawed frog).